We begin with the raw amino-acid sequence, 246 residues long: UDP-N-acetyl-D-mannosaminuronic acid transferase (246 aa).

This sequence belongs to the glycosyltransferase 26 family.

The catalysed reaction is UDP-N-acetyl-alpha-D-mannosaminouronate + N-acetyl-alpha-D-glucosaminyl-di-trans,octa-cis-undecaprenyl diphosphate = beta-D-ManNAcA-(1-&gt;4)-alpha-D-GlcNAc-di-trans,octa-cis-undecaprenyl diphosphate + UDP + H(+). It functions in the pathway bacterial outer membrane biogenesis; enterobacterial common antigen biosynthesis. In terms of biological role, catalyzes the synthesis of Und-PP-GlcNAc-ManNAcA (Lipid II), the second lipid-linked intermediate involved in enterobacterial common antigen (ECA) synthesis. The polypeptide is UDP-N-acetyl-D-mannosaminuronic acid transferase (Escherichia coli O127:H6 (strain E2348/69 / EPEC)).